Here is a 133-residue protein sequence, read N- to C-terminus: Covalently-linked cell wall protein 12 (133 aa).

Positions 1 to 18 are cleaved as a signal peptide; that stretch reads MQFSTVASIAAVAAVASA. N21 is a glycosylation site (N-linked (GlcNAc...) asparagine). T23, T24, and T26 each carry an O-linked (Man) threonine glycan. Residues S28 and S31 are each glycosylated (O-linked (Man) serine). O-linked (Man) threonine glycans are attached at residues T32, T33, T36, and T38. Residues S39 and S46 are each glycosylated (O-linked (Man) serine). T48 carries O-linked (Man) threonine glycosylation. 2 consecutive repeat copies span residues 75 to 88 and 91 to 103. Positions 79 to 104 are disordered; that stretch reads PKNGTSTAAPVTSTEAPKNTTSAAPT. K80 participates in a covalent cross-link: Glycyl lysine isopeptide (Lys-Gly) (interchain with G-Cter in ubiquitin). 2 N-linked (GlcNAc...) asparagine glycosylation sites follow: N81 and N97. Over residues 81-104 the composition is skewed to polar residues; sequence NGTSTAAPVTSTEAPKNTTSAAPT. A lipid anchor (GPI-anchor amidated glycine) is attached at G112. A propeptide spans 113–133 (removed in mature form); sequence AAAKALPAAGALLAGAAALLL.

To yeast protein YDR134C. In terms of processing, extensively O-glycosylated; glycans consist probably of single mannose residues. N-glycosylated. The GPI-anchor is attached to the protein in the endoplasmic reticulum and serves to target the protein to the cell surface. There, the glucosamine-inositol phospholipid moiety is cleaved off and the GPI-modified mannoprotein is covalently attached via its lipidless GPI glycan remnant to the 1,6-beta-glucan of the outer cell wall layer.

It is found in the secreted. The protein localises to the cell wall. It localises to the membrane. Functionally, component of the cell wall. May play a role in the formation of a tightly packed outer mannan layer, which protects the inner glucan. The chain is Covalently-linked cell wall protein 12 (CCW12) from Saccharomyces cerevisiae (strain ATCC 204508 / S288c) (Baker's yeast).